A 380-amino-acid polypeptide reads, in one-letter code: Flap endonuclease 1 (380 aa).

The segment at Met-1–His-105 is N-domain. Asp-34 contributes to the Mg(2+) binding site. Positions 47 and 71 each coordinate DNA. Mg(2+) is bound by residues Asp-87, Glu-159, Glu-161, Asp-180, and Asp-182. The segment at Met-123–Tyr-254 is I-domain. Glu-159 is a DNA binding site. Residues Gly-232 and Asp-234 each coordinate DNA. Asp-234 lines the Mg(2+) pocket. An interaction with PCNA region spans residues Pro-337–Phe-345. A disordered region spans residues Arg-340–Arg-380. The span at Asp-342–Lys-353 shows a compositional bias: low complexity. Ser-350 and Ser-351 each carry phosphoserine. The segment covering Ser-370–Arg-380 has biased composition (basic and acidic residues).

Belongs to the XPG/RAD2 endonuclease family. FEN1 subfamily. As to quaternary structure, interacts with PCNA. Three molecules of rad2 bind to one PCNA trimer with each molecule binding to one PCNA monomer. PCNA stimulates the nuclease activity without altering cleavage specificity. Requires Mg(2+) as cofactor. In terms of processing, phosphorylated. Phosphorylation upon DNA damage induces relocalization to the nuclear plasma.

Its subcellular location is the nucleus. The protein localises to the nucleolus. The protein resides in the nucleoplasm. It localises to the mitochondrion. Its function is as follows. Structure-specific nuclease with 5'-flap endonuclease and 5'-3' exonuclease activities involved in DNA replication and repair. During DNA replication, cleaves the 5'-overhanging flap structure that is generated by displacement synthesis when DNA polymerase encounters the 5'-end of a downstream Okazaki fragment. It enters the flap from the 5'-end and then tracks to cleave the flap base, leaving a nick for ligation. Also involved in the long patch base excision repair (LP-BER) pathway, by cleaving within the apurinic/apyrimidinic (AP) site-terminated flap. Acts as a genome stabilization factor that prevents flaps from equilibrating into structures that lead to duplications and deletions. Also possesses 5'-3' exonuclease activity on nicked or gapped double-stranded DNA, and exhibits RNase H activity. Also involved in replication and repair of rDNA and in repairing mitochondrial DNA. The protein is Flap endonuclease 1 of Schizosaccharomyces pombe (strain 972 / ATCC 24843) (Fission yeast).